The chain runs to 188 residues: FMN-dependent NADPH-azoreductase (188 aa).

This sequence belongs to the azoreductase type 2 family. In terms of assembly, homotetramer. FMN serves as cofactor.

Its function is as follows. Catalyzes the reductive cleavage of azo bond in aromatic azo compounds to the corresponding amines. Requires NADPH, but not NADH, as an electron donor for its activity. The protein is FMN-dependent NADPH-azoreductase (azo1) of Staphylococcus haemolyticus (strain JCSC1435).